The sequence spans 299 residues: ATP phosphoribosyltransferase (299 aa).

This sequence belongs to the ATP phosphoribosyltransferase family. Long subfamily. Mg(2+) serves as cofactor.

It localises to the cytoplasm. The catalysed reaction is 1-(5-phospho-beta-D-ribosyl)-ATP + diphosphate = 5-phospho-alpha-D-ribose 1-diphosphate + ATP. It functions in the pathway amino-acid biosynthesis; L-histidine biosynthesis; L-histidine from 5-phospho-alpha-D-ribose 1-diphosphate: step 1/9. Its activity is regulated as follows. Feedback inhibited by histidine. Its function is as follows. Catalyzes the condensation of ATP and 5-phosphoribose 1-diphosphate to form N'-(5'-phosphoribosyl)-ATP (PR-ATP). Has a crucial role in the pathway because the rate of histidine biosynthesis seems to be controlled primarily by regulation of HisG enzymatic activity. This is ATP phosphoribosyltransferase from Campylobacter jejuni subsp. jejuni serotype O:23/36 (strain 81-176).